Consider the following 957-residue polypeptide: Dystrophin-related protein 2 (957 aa).

2 Spectrin repeats span residues 102–179 (DHSG…EELE) and 231–337 (EHLL…QLQD). Positions 358–383 (WERAISPNKVPYYINHQAQTTCWDHP) constitute a WW domain. A ZZ-type; degenerate zinc finger spans residues 605 to 661 (KHQTKCSICRQCPIKGFRYRSLKQFNVDICQTCFLTGKASKGNKLHYPIMEYYTPTT). Positions 610, 613, 634, and 637 each coordinate Zn(2+). S748 carries the post-translational modification Phosphoserine. The segment covering 877–894 (PPTESDGNGSAGSSLASS) has biased composition (low complexity). Residues 877–923 (PPTESDGNGSAGSSLASSPRQSEGSHPREKGQTTPDTEAADDVGSKS) form a disordered region. The residue at position 910 (T910) is a Phosphothreonine.

In terms of assembly, interacts with PRX; this enhances phosphorylation. Identified in a dystroglycan complex that contains at least PRX, DRP2, UTRN, DMD and DAG1. As to expression, detected in trigeminal nerve Schwann cells. Detected in brain cortex and hippocampus. Detected in brain membrane fractions and highly enriched in the postsynaptic density (at protein level).

It is found in the postsynaptic density. The protein resides in the cell projection. It localises to the dendrite. The protein localises to the perikaryon. Its subcellular location is the cell membrane. Functionally, required for normal myelination and for normal organization of the cytoplasm and the formation of Cajal bands in myelinating Schwann cells. Required for normal PRX location at appositions between the abaxonal surface of the myelin sheath and the Schwann cell plasma membrane. Possibly involved in membrane-cytoskeleton interactions of the central nervous system. The protein is Dystrophin-related protein 2 (Drp2) of Rattus norvegicus (Rat).